Here is a 315-residue protein sequence, read N- to C-terminus: Serpentine receptor class delta-31 (315 aa).

A run of 7 helical transmembrane segments spans residues 6 to 26 (LHSILSLTAVLLNAFTMYLAI), 38 to 58 (AIITIKTATDILTSIMSFFVM), 83 to 103 (ACYVGHMLMLCFLEYNLIWMI), 124 to 144 (VFVAFCLSIPSIIHMVVWFSI), 174 to 194 (ITLITQLFITAFLVIVAYIWI), 225 to 245 (FQVFLPSFIFLGVITFASMFT), and 256 to 276 (AISVIFMFSPIISPFSYILFV).

The protein belongs to the nematode receptor-like protein srd family.

The protein resides in the membrane. The protein is Serpentine receptor class delta-31 (srd-31) of Caenorhabditis elegans.